The primary structure comprises 423 residues: Probable serine/threonine-protein kinase PBL5 (423 aa).

A disordered region spans residues 1–66 (MGCFGCSKKS…DVNNEGGVGK (66 aa)). A lipid anchor (N-myristoyl glycine) is attached at Gly2. Cys3 is lipidated: S-palmitoyl cysteine. Residues 12–22 (KRSETNKDTVI) show a composition bias toward basic and acidic residues. Over residues 43–52 (TQPSSDSTKV) the composition is skewed to polar residues. Phosphothreonine is present on Thr92. One can recognise a Protein kinase domain in the interval 103 to 380 (FRSDCFLGEG…SDVVLALNFL (278 aa)). ATP is bound by residues 109-117 (LGEGGFGKV) and Lys132. Residue Tyr177 is modified to Phosphotyrosine. Asp230 (proton acceptor) is an active-site residue. Phosphoserine occurs at positions 234 and 264. Residues Thr265 and Thr270 each carry the phosphothreonine modification. Tyr278 carries the post-translational modification Phosphotyrosine. Over residues 383 to 398 (SKYDPNSPSSSSGKNP) the composition is skewed to low complexity. Residues 383 to 423 (SKYDPNSPSSSSGKNPSFHRDRDDEEKRPHLVKETECEGSS) are disordered. The span at 400 to 423 (FHRDRDDEEKRPHLVKETECEGSS) shows a compositional bias: basic and acidic residues.

Belongs to the protein kinase superfamily. Ser/Thr protein kinase family. Post-translationally, palmitoylation at Cys-3 and Cys-6 are required for plasma membrane location.

Its subcellular location is the cell membrane. It catalyses the reaction L-seryl-[protein] + ATP = O-phospho-L-seryl-[protein] + ADP + H(+). It carries out the reaction L-threonyl-[protein] + ATP = O-phospho-L-threonyl-[protein] + ADP + H(+). Functionally, may be involved in plant defense signaling. The chain is Probable serine/threonine-protein kinase PBL5 from Arabidopsis thaliana (Mouse-ear cress).